Here is a 588-residue protein sequence, read N- to C-terminus: Protein cereblon (588 aa).

2 disordered regions span residues 1–107 and 159–197; these read MDDE…DDSD and QERR…DIGF. Polar residues predominate over residues 41–50; sequence AWNNATQDEQ. The span at 75 to 85 shows a compositional bias: acidic residues; that stretch reads MVEDVLQDDTA. Residues 86-96 are compositionally biased toward polar residues; it reads SEGSHPSSDMS. Over residues 159 to 168 the composition is skewed to basic and acidic residues; the sequence is QERRRSRTSE. Pro residues predominate over residues 181–192; sequence NDPPPQQPPRPP. The Lon N-terminal domain maps to 228-454; that stretch reads HMLIFLHQHI…LIKSTFKDES (227 aa). In terms of domain architecture, CULT spans 453–562; sequence ESLFFCRYCN…LAGSSVRIGK (110 aa). Positions 458, 461, 527, and 530 each coordinate Zn(2+).

Belongs to the CRBN family. In terms of assembly, likely a component of a DCX (DDB1-CUL4-X-box) protein ligase complex. May interact with pic/DDB1. Ubiquitinated.

It localises to the nucleus. It participates in protein modification; protein ubiquitination. In terms of biological role, substrate recognition component of a DCX (DDB1-CUL4-X-box) E3 protein ligase complex that mediates the ubiquitination and subsequent proteasomal degradation of target proteins. Has an essential role in mediating growth by negatively regulating insulin signaling. It also has a role in maintaining presynaptic function in the neuromuscular junction synapses of third-instar larvae. The sequence is that of Protein cereblon from Drosophila yakuba (Fruit fly).